Here is a 383-residue protein sequence, read N- to C-terminus: Succinyl-diaminopimelate desuccinylase (383 aa).

A Zn(2+)-binding site is contributed by histidine 73. Residue aspartate 75 is part of the active site. Residue aspartate 107 coordinates Zn(2+). The active-site Proton acceptor is glutamate 141. The Zn(2+) site is built by glutamate 142, glutamate 170, and histidine 356.

It belongs to the peptidase M20A family. DapE subfamily. As to quaternary structure, homodimer. It depends on Zn(2+) as a cofactor. Co(2+) is required as a cofactor.

The enzyme catalyses N-succinyl-(2S,6S)-2,6-diaminopimelate + H2O = (2S,6S)-2,6-diaminopimelate + succinate. It functions in the pathway amino-acid biosynthesis; L-lysine biosynthesis via DAP pathway; LL-2,6-diaminopimelate from (S)-tetrahydrodipicolinate (succinylase route): step 3/3. Its function is as follows. Catalyzes the hydrolysis of N-succinyl-L,L-diaminopimelic acid (SDAP), forming succinate and LL-2,6-diaminopimelate (DAP), an intermediate involved in the bacterial biosynthesis of lysine and meso-diaminopimelic acid, an essential component of bacterial cell walls. This chain is Succinyl-diaminopimelate desuccinylase, found in Pseudomonas fluorescens (strain Pf0-1).